We begin with the raw amino-acid sequence, 238 residues long: Pyridoxine 5'-phosphate synthase (238 aa).

3-amino-2-oxopropyl phosphate is bound at residue Asn-7. 9–10 (DH) contributes to the 1-deoxy-D-xylulose 5-phosphate binding site. Arg-18 is a 3-amino-2-oxopropyl phosphate binding site. His-43 functions as the Proton acceptor in the catalytic mechanism. 1-deoxy-D-xylulose 5-phosphate is bound by residues Arg-45 and His-50. The active-site Proton acceptor is the Glu-70. Thr-100 contributes to the 1-deoxy-D-xylulose 5-phosphate binding site. His-190 (proton donor) is an active-site residue. 3-amino-2-oxopropyl phosphate contacts are provided by residues Gly-191 and 212-213 (GH).

Belongs to the PNP synthase family. Homooctamer; tetramer of dimers.

It localises to the cytoplasm. The enzyme catalyses 3-amino-2-oxopropyl phosphate + 1-deoxy-D-xylulose 5-phosphate = pyridoxine 5'-phosphate + phosphate + 2 H2O + H(+). Its pathway is cofactor biosynthesis; pyridoxine 5'-phosphate biosynthesis; pyridoxine 5'-phosphate from D-erythrose 4-phosphate: step 5/5. In terms of biological role, catalyzes the complicated ring closure reaction between the two acyclic compounds 1-deoxy-D-xylulose-5-phosphate (DXP) and 3-amino-2-oxopropyl phosphate (1-amino-acetone-3-phosphate or AAP) to form pyridoxine 5'-phosphate (PNP) and inorganic phosphate. The sequence is that of Pyridoxine 5'-phosphate synthase from Prochlorococcus marinus (strain MIT 9215).